The sequence spans 503 residues: Diels-Alderase cghA (503 aa).

The protein belongs to the Diels-Alderase family.

It carries out the reaction (2S)-3-[(2S)-3,5-dioxo-4-[(2E,4R,6R,8E,10E,12E)-4,6,12-trimethyltetradeca-2,8,10,12-tetraenoyl]pyrrolidin-2-yl]-2-hydroxy-2-methylpropanoate = sch 210972. It functions in the pathway secondary metabolite biosynthesis. Its function is as follows. Diels-Alderase; part of the gene cluster that mediates the biosynthesis of the tetramic acid Sch210972, a potential anti-HIV fungal natural product that contains a decalin core. The PKS module of cghG together with the enoylreductase cghC catalyze the formation of the polyketide unit which is then conjugated to 4-hydroxyl-4-methyl glutamate (HMG) by the condensation domain of the cghG NRPS module. One unique structural feature of Sch210972 is the tetramic acid motif proposed to be derived from the non-proteinogenic amino acid HMG, by a Dieckmann-type condensation catalyzed by the reductase domain of cghG. The aldolase cghB catalyzes the aldol condensation of 2 molecules of pyruvic acid to yield the intermediate 4-hydroxyl-4-methyl-2-oxoglutarate (HMOG), which can then be stereoselectively transaminated by an unidentified enzyme to form HMG. The Diels-Alderase cghA then uses the Dieckmann product released by cghG as substrate and catalyzes the Diels-Alder cycloaddition to form the decalin ring of Sch210972. CghA also suppresses the nonenzymatic formation of the alternative stereoisomer. This is Diels-Alderase cghA from Chaetomium globosum (strain ATCC 6205 / CBS 148.51 / DSM 1962 / NBRC 6347 / NRRL 1970) (Soil fungus).